A 242-amino-acid polypeptide reads, in one-letter code: Methylthioribulose-1-phosphate dehydratase (242 aa).

Position 97 (Cys97) interacts with substrate. Zn(2+) is bound by residues His115 and His117. The active-site Proton donor/acceptor is Glu139. His195 serves as a coordination point for Zn(2+).

It belongs to the aldolase class II family. MtnB subfamily. Homotetramer. Interacts with APAF1. May interact with CASP1. Zn(2+) serves as cofactor.

Its subcellular location is the cytoplasm. It catalyses the reaction 5-(methylsulfanyl)-D-ribulose 1-phosphate = 5-methylsulfanyl-2,3-dioxopentyl phosphate + H2O. It functions in the pathway amino-acid biosynthesis; L-methionine biosynthesis via salvage pathway; L-methionine from S-methyl-5-thio-alpha-D-ribose 1-phosphate: step 2/6. Catalyzes the dehydration of methylthioribulose-1-phosphate (MTRu-1-P) into 2,3-diketo-5-methylthiopentyl-1-phosphate (DK-MTP-1-P). Functions in the methionine salvage pathway, which plays a key role in cancer, apoptosis, microbial proliferation and inflammation. May inhibit the CASP1-related inflammatory response (pyroptosis), the CASP9-dependent apoptotic pathway and the cytochrome c-dependent and APAF1-mediated cell death. The chain is Methylthioribulose-1-phosphate dehydratase from Bos taurus (Bovine).